The following is a 432-amino-acid chain: Enolase (432 aa).

A (2R)-2-phosphoglycerate-binding site is contributed by glutamine 166. Glutamate 210 acts as the Proton donor in catalysis. Mg(2+) contacts are provided by aspartate 247, glutamate 288, and aspartate 315. (2R)-2-phosphoglycerate contacts are provided by lysine 340, arginine 369, serine 370, and lysine 391. Lysine 340 acts as the Proton acceptor in catalysis.

This sequence belongs to the enolase family. The cofactor is Mg(2+).

It localises to the cytoplasm. Its subcellular location is the secreted. The protein resides in the cell surface. It catalyses the reaction (2R)-2-phosphoglycerate = phosphoenolpyruvate + H2O. Its pathway is carbohydrate degradation; glycolysis; pyruvate from D-glyceraldehyde 3-phosphate: step 4/5. Its function is as follows. Catalyzes the reversible conversion of 2-phosphoglycerate (2-PG) into phosphoenolpyruvate (PEP). It is essential for the degradation of carbohydrates via glycolysis. The chain is Enolase from Aeropyrum pernix (strain ATCC 700893 / DSM 11879 / JCM 9820 / NBRC 100138 / K1).